Consider the following 65-residue polypeptide: Stress-associated endoplasmic reticulum protein 2 (65 aa).

The chain crosses the membrane as a helical span at residues 38-58 (GPWLLALFVFVVCGSAIFQII).

It belongs to the RAMP4 family. As to quaternary structure, interacts with SEC61B, SEC61A1 and the SEC61 complex. Interacts with CANX.

Its subcellular location is the membrane. It localises to the endoplasmic reticulum membrane. Interacts with target proteins during their translocation into the lumen of the endoplasmic reticulum. Protects unfolded target proteins against degradation during ER stress. May facilitate glycosylation of target proteins after termination of ER stress. May modulate the use of N-glycosylation sites on target proteins. The polypeptide is Stress-associated endoplasmic reticulum protein 2 (SERP2) (Bos taurus (Bovine)).